Consider the following 215-residue polypeptide: Orotate phosphoribosyltransferase (215 aa).

Residue lysine 26 participates in 5-phospho-alpha-D-ribose 1-diphosphate binding. An orotate-binding site is contributed by 34-35 (FF). 5-phospho-alpha-D-ribose 1-diphosphate is bound by residues 72–73 (YK), arginine 99, lysine 100, lysine 103, histidine 105, and 124–132 (DDVITAGTA). Threonine 128 and arginine 156 together coordinate orotate.

The protein belongs to the purine/pyrimidine phosphoribosyltransferase family. PyrE subfamily. As to quaternary structure, homodimer. The cofactor is Mg(2+).

The enzyme catalyses orotidine 5'-phosphate + diphosphate = orotate + 5-phospho-alpha-D-ribose 1-diphosphate. The protein operates within pyrimidine metabolism; UMP biosynthesis via de novo pathway; UMP from orotate: step 1/2. Catalyzes the transfer of a ribosyl phosphate group from 5-phosphoribose 1-diphosphate to orotate, leading to the formation of orotidine monophosphate (OMP). The sequence is that of Orotate phosphoribosyltransferase from Yersinia pseudotuberculosis serotype O:1b (strain IP 31758).